Consider the following 465-residue polypeptide: Probable oxidoreductase AIM17 (465 aa).

The N-terminal 16 residues, 1 to 16, are a transit peptide targeting the mitochondrion; the sequence is MLRSNLCRGSRILARL. 3 residues coordinate Fe cation: His-246, Asp-248, and His-428.

It belongs to the gamma-BBH/TMLD family. Fe(2+) is required as a cofactor. Requires L-ascorbate as cofactor.

Its subcellular location is the mitochondrion. This Saccharomyces cerevisiae (strain ATCC 204508 / S288c) (Baker's yeast) protein is Probable oxidoreductase AIM17 (AIM17).